The following is a 134-amino-acid chain: Ethylmalonyl-CoA/methylmalonyl-CoA epimerase (134 aa).

The VOC domain maps to 4–134; the sequence is RLNHVAIAVP…NGCLVELEQV (131 aa). Positions 7, 79, and 130 each coordinate Co(2+). Residue E130 is the Proton donor/acceptor of the active site.

This sequence belongs to the methylmalonyl-CoA epimerase family. Requires Co(2+) as cofactor. Mn(2+) serves as cofactor.

It catalyses the reaction (2R)-ethylmalonyl-CoA = (2S)-ethylmalonyl-CoA. The catalysed reaction is (R)-methylmalonyl-CoA = (S)-methylmalonyl-CoA. Its function is as follows. Promiscuous isomerase that catalyzes epimerization of both ethylmalonyl-CoA and methylmalonyl-CoA. Has thus a dual role in the ethylmalonyl-CoA pathway for acetyl-CoA assimilation required for R.sphaeroides growth on acetate as sole carbon source. This Cereibacter sphaeroides (strain ATCC 17023 / DSM 158 / JCM 6121 / CCUG 31486 / LMG 2827 / NBRC 12203 / NCIMB 8253 / ATH 2.4.1.) (Rhodobacter sphaeroides) protein is Ethylmalonyl-CoA/methylmalonyl-CoA epimerase.